Consider the following 1299-residue polypeptide: Tenascin-N (1299 aa).

The N-terminal stretch at 1-28 (MSLQEMFRFPMGLLLGSVLLVASAPATL) is a signal peptide. EGF-like domains are found at residues 167–198 (ERLA…ADCG), 199–229 (YPAC…EDCS), and 230–260 (EKRC…LDCA). 9 cysteine pairs are disulfide-bonded: Cys171-Cys181, Cys175-Cys186, Cys188-Cys197, Cys202-Cys212, Cys206-Cys217, Cys219-Cys228, Cys233-Cys243, Cys237-Cys248, and Cys250-Cys259. 9 consecutive Fibronectin type-III domains span residues 264-352 (TPQG…TDLA), 353-444 (VLGT…TEID), 445-532 (SPTN…TEID), 533-623 (SPAN…IDSP), 624-709 (KNLV…TDID), 710-800 (SPQN…IDSP), 801-886 (QNLV…TEID), 887-976 (GPKN…LDPP), and 977-1063 (RNLR…VGAR). A disordered region spans residues 605-624 (GDRESKKADTNAPTDIDSPK). The segment covering 960 to 977 (QESKKADTKAQTELDPPR) has biased composition (basic and acidic residues). The disordered stretch occupies residues 960–982 (QESKKADTKAQTELDPPRNLRPS). The Fibrinogen C-terminal domain occupies 1061 to 1278 (GARFPHPSDC…YVELKIRPHG (218 aa)). N-linked (GlcNAc...) asparagine glycosylation is present at Asn1149.

It belongs to the tenascin family. Homohexamer. Not detected in normal adult mammary tissues or brain but expressed in most breast tumors and brain tumors, such as glioblastomas, astrocytomas and oligodendrogliomas, tested. In brain tumors, detected around the endothelial cell layer of the clood vessels.

It is found in the secreted. The protein resides in the extracellular space. The protein localises to the extracellular matrix. Extracellular matrix protein that seems to be a ligand for ITGA8:ITGB1, ITGAV:ITGB1 and ITGA4:ITGB1. Involved in neurite outgrowth and cell migration in hippocampal explants. During endochondral bone formation, inhibits proliferation and differentiation of proteoblasts mediated by canonical WNT signaling. In tumors, stimulates angiogenesis by elongation, migration and sprouting of endothelial cells. Expressed in most mammary tumors, may facilitate tumorigenesis by supporting the migratory behavior of breast cancer cells. This Homo sapiens (Human) protein is Tenascin-N.